The primary structure comprises 262 residues: uncharacterized protein (262 aa).

In terms of domain architecture, ABC transporter spans 5 to 223; it reads IKVENLTKYF…MAYIEYLDNG (219 aa). 37–44 contacts ATP; that stretch reads GHNGAGKT.

It belongs to the ABC transporter superfamily.

This is an uncharacterized protein from Methanocaldococcus jannaschii (strain ATCC 43067 / DSM 2661 / JAL-1 / JCM 10045 / NBRC 100440) (Methanococcus jannaschii).